A 386-amino-acid chain; its full sequence is Alanine racemase (386 aa).

Residue lysine 48 is the Proton acceptor; specific for D-alanine of the active site. The residue at position 48 (lysine 48) is an N6-(pyridoxal phosphate)lysine. Arginine 149 is a binding site for substrate. The active-site Proton acceptor; specific for L-alanine is the tyrosine 278. Position 326 (methionine 326) interacts with substrate.

This sequence belongs to the alanine racemase family. Requires pyridoxal 5'-phosphate as cofactor.

It carries out the reaction L-alanine = D-alanine. Its pathway is amino-acid biosynthesis; D-alanine biosynthesis; D-alanine from L-alanine: step 1/1. Its function is as follows. Catalyzes the interconversion of L-alanine and D-alanine. May also act on other amino acids. The protein is Alanine racemase (alr) of Nostoc sp. (strain PCC 7120 / SAG 25.82 / UTEX 2576).